Consider the following 270-residue polypeptide: 2-oxoglutarate synthase subunit KorB (270 aa).

Heterotetramer of the KorA, KorB, KorC and KorD subunits.

It carries out the reaction 2 oxidized [2Fe-2S]-[ferredoxin] + 2-oxoglutarate + CoA = succinyl-CoA + 2 reduced [2Fe-2S]-[ferredoxin] + CO2 + H(+). The protein is 2-oxoglutarate synthase subunit KorB (korB) of Methanocaldococcus jannaschii (strain ATCC 43067 / DSM 2661 / JAL-1 / JCM 10045 / NBRC 100440) (Methanococcus jannaschii).